The sequence spans 393 residues: Prokineticin receptor 1 (393 aa).

Topologically, residues 1-62 (METTVGTLGE…TNSRTFFAAK (62 aa)) are extracellular. N11 carries N-linked (GlcNAc...) asparagine glycosylation. A helical transmembrane segment spans residues 63 to 83 (IVIGMALVGIMLVCGIGNFIF). At 84-98 (ITALARYKKLRNLTN) the chain is on the cytoplasmic side. The chain crosses the membrane as a helical span at residues 99 to 119 (LLIANLAISDFLVAIVCCPFE). Residues 120-145 (MDYYVVRQLSWEHGHVLCASVNYLRT) are Extracellular-facing. C137 and C217 form a disulfide bridge. Residues 146 to 166 (VSLYVSTNALLAIAIDRYLAI) form a helical membrane-spanning segment. Residues 167–179 (VHPLRPRMKCQTA) lie on the Cytoplasmic side of the membrane. Residues 180–200 (AGLIFLVWSVSILIAIPAAYF) form a helical membrane-spanning segment. Over 201 to 232 (TTETVLVIVESQEKIFCGQIWPVDQQFYYRSY) the chain is Extracellular. The chain crosses the membrane as a helical span at residues 233 to 253 (FLLVFGLEFVGPVIAMTLCYA). Residues 254-282 (RVSRELWFKAVPGFQTEQIRRRLRCRRRT) lie on the Cytoplasmic side of the membrane. The helical transmembrane segment at 283–303 (VLGLVCVLSAYVLCWAPFYGF) threads the bilayer. Residues 304–322 (TIVRDFFPSVFVKEKHYLT) lie on the Extracellular side of the membrane. The helical transmembrane segment at 323–343 (AFYVVECIAMSNSMINTLCFV) threads the bilayer. Residues 344–393 (TVRNNTSKYLKRILRLQWRASPSGSKASADLDLRTTGIPATEEVDCIRLK) are Cytoplasmic-facing.

This sequence belongs to the G-protein coupled receptor 1 family. In terms of tissue distribution, widely expressed in peripheral tissues with the highest level in the spleen and moderate levels in the adipose tissues, thymus, lung, kidney, testis, uterus and small intestine.

It localises to the cell membrane. Functionally, receptor for prokineticin 1. Exclusively coupled to the G(q) subclass of heteromeric G proteins. Activation leads to mobilization of calcium, stimulation of phosphoinositide turnover and activation of p44/p42 mitogen-activated protein kinase. May play a role during early pregnancy. The chain is Prokineticin receptor 1 (Prokr1) from Rattus norvegicus (Rat).